Consider the following 213-residue polypeptide: Andrastin A biosynthesis cluster protein B (213 aa).

In terms of biological role, part of the gene cluster that mediates the biosynthesis of andrastins, meroterpenoid compounds that exhibit inhibitory activity against ras farnesyltransferase, suggesting that they could be promising leads for antitumor agents. The first step of the pathway is the synthesis of 3,5-dimethylorsellinic acid (DMOA) by the polyketide synthase adrD via condensation of one acetyl-CoA starter unit with 3 malonyl-CoA units and 2 methylations. DMAO is then converted to farnesyl-DMAO by the prenyltransferase adrG. The methyltransferase adrK catalyzes the methylation of the carboxyl group of farnesyl-DMAO to farnesyl-DMAO methyl ester which is further converted to epoxyfarnesyl-DMAO methyl ester by the FAD-dependent monooxygenase adrH. The terpene cyclase adrI then catalyzes the carbon skeletal rearrangement to generate the andrastin E, the first compound in the pathway having the andrastin scaffold, with the tetracyclic ring system. The post-cyclization tailoring enzymes adrF, adrE, adrJ, and adrA, are involved in the conversion of andrastin E into andrastin A. The short chain dehydrogenase adrF is responsible for the oxidation of the C-3 a hydroxyl group of andrastin E to yield the corresponding ketone, andrastin D. The ketoreductase adrE stereoselectively reduces the carbonyl moiety to reverse the stereochemistry of the C-3 position to yield andrastin F. The acetyltransferase adrJ is the acetyltransferase that attaches the acetyl group to the C-3 hydroxyl group of andrastin F to yield andrastin C. Finally, the cytochrome P450 monooxygenase adrA catalyzes two sequential oxidation reactions of the C-23 methyl group, to generate the corresponding alcohol andrastin B, and aldehyde andrastin A. The chain is Andrastin A biosynthesis cluster protein B from Penicillium rubens (strain ATCC 28089 / DSM 1075 / NRRL 1951 / Wisconsin 54-1255) (Penicillium chrysogenum).